We begin with the raw amino-acid sequence, 75 residues long: Small ribosomal subunit protein bS18 (75 aa).

Belongs to the bacterial ribosomal protein bS18 family. In terms of assembly, part of the 30S ribosomal subunit. Forms a tight heterodimer with protein bS6.

Its function is as follows. Binds as a heterodimer with protein bS6 to the central domain of the 16S rRNA, where it helps stabilize the platform of the 30S subunit. In Glaesserella parasuis serovar 5 (strain SH0165) (Haemophilus parasuis), this protein is Small ribosomal subunit protein bS18.